The sequence spans 118 residues: MARIAGINIPDQKHTVIALTAIFGIGRTRARAICAATAIAETAKIKELSEAQIDTLREEVAKYLVEGDLRREISMNIKRLMDLGCYRGLRHRRSLPLRGQRTKTNARTRKGPRKPIRK.

Residues 94 to 118 (SLPLRGQRTKTNARTRKGPRKPIRK) form a disordered region.

The protein belongs to the universal ribosomal protein uS13 family. In terms of assembly, part of the 30S ribosomal subunit. Forms a loose heterodimer with protein S19. Forms two bridges to the 50S subunit in the 70S ribosome.

Located at the top of the head of the 30S subunit, it contacts several helices of the 16S rRNA. In the 70S ribosome it contacts the 23S rRNA (bridge B1a) and protein L5 of the 50S subunit (bridge B1b), connecting the 2 subunits; these bridges are implicated in subunit movement. Contacts the tRNAs in the A and P-sites. This Shewanella sp. (strain W3-18-1) protein is Small ribosomal subunit protein uS13.